The sequence spans 312 residues: Ribosomal protein L11 methyltransferase (312 aa).

Positions 162, 183, 205, and 248 each coordinate S-adenosyl-L-methionine.

The protein belongs to the methyltransferase superfamily. PrmA family.

The protein localises to the cytoplasm. The enzyme catalyses L-lysyl-[protein] + 3 S-adenosyl-L-methionine = N(6),N(6),N(6)-trimethyl-L-lysyl-[protein] + 3 S-adenosyl-L-homocysteine + 3 H(+). Its function is as follows. Methylates ribosomal protein L11. The sequence is that of Ribosomal protein L11 methyltransferase from Geobacillus kaustophilus (strain HTA426).